A 255-amino-acid polypeptide reads, in one-letter code: Acetylglutamate kinase (255 aa).

Substrate contacts are provided by residues 40 to 41, Arg-62, and Asn-153; that span reads GG.

This sequence belongs to the acetylglutamate kinase family. ArgB subfamily.

It is found in the cytoplasm. The enzyme catalyses N-acetyl-L-glutamate + ATP = N-acetyl-L-glutamyl 5-phosphate + ADP. It participates in amino-acid biosynthesis; L-arginine biosynthesis; N(2)-acetyl-L-ornithine from L-glutamate: step 2/4. Catalyzes the ATP-dependent phosphorylation of N-acetyl-L-glutamate. In Bacillus thuringiensis (strain Al Hakam), this protein is Acetylglutamate kinase.